A 307-amino-acid polypeptide reads, in one-letter code: Ornithine carbamoyltransferase (307 aa).

Carbamoyl phosphate is bound by residues Ser-53–Thr-56, Gln-80, Arg-104, and His-131–Gln-134. L-ornithine-binding positions include Asn-162, Asp-220, and Ser-224–Met-225. Carbamoyl phosphate contacts are provided by residues Cys-260–Leu-261 and Arg-288.

Belongs to the aspartate/ornithine carbamoyltransferase superfamily. OTCase family.

It localises to the cytoplasm. It carries out the reaction carbamoyl phosphate + L-ornithine = L-citrulline + phosphate + H(+). It participates in amino-acid biosynthesis; L-arginine biosynthesis; L-arginine from L-ornithine and carbamoyl phosphate: step 1/3. Functionally, reversibly catalyzes the transfer of the carbamoyl group from carbamoyl phosphate (CP) to the N(epsilon) atom of ornithine (ORN) to produce L-citrulline. This is Ornithine carbamoyltransferase from Nitrosomonas eutropha (strain DSM 101675 / C91 / Nm57).